A 1771-amino-acid chain; its full sequence is Gag-Pro-Pol polyprotein (1771 aa).

Gly-2 carries the N-myristoyl glycine; by host lipid modification. Positions Ala-101 to Leu-161 are excised as a propeptide. Polar residues-rich tracts occupy residues Asn-113–Pro-125 and Lys-140–Thr-152. Residues Asn-113–Val-178 are disordered. A PPXY motif motif is present at residues Pro-202–Tyr-205. The short motif at Pro-210 to Pro-213 is the PTAP/PSAP motif element. Residues Met-216–Glu-257 adopt a coiled-coil conformation. Positions Thr-260–Ile-279 are disordered. The PTAP/PSAP motif motif lies at Ala-335–Pro-338. 2 CCHC-type zinc fingers span residues Gly-547 to Glu-564 and Gly-576 to Ser-593. Positions Lys-592–Leu-626 are disordered. Residues Phe-780–Leu-856 form the Peptidase A2 domain. Catalysis depends on Asp-785, which acts as the Protease; shared with dimeric partner. Residues Pro-867–Thr-913 enclose the G-patch domain. One can recognise a Reverse transcriptase domain in the interval Leu-959–Leu-1147. The Mg(2+) site is built by Asp-1024, Asp-1099, Asp-1100, Asp-1370, Glu-1399, Asp-1420, and Asp-1484. Residues Leu-1361–Ser-1492 form the RNase H type-1 domain. The segment at Thr-1496–Val-1537 adopts an Integrase-type zinc-finger fold. Zn(2+) is bound by residues His-1505, His-1509, Cys-1533, and Cys-1536. The region spanning Arg-1550 to Lys-1719 is the Integrase catalytic domain. Mg(2+) is bound by residues Asp-1561, Asp-1618, and Glu-1654. The segment at residues Ala-1716–Asn-1765 is a DNA-binding region (integrase-type).

This sequence belongs to the retroviral Pol polyprotein family. Homodimer. As to quaternary structure, interacts with the G-patch peptide. In terms of assembly, interacts with the reverse transcriptase/ribonuclease H. Homotrimer. The cofactor is Mg(2+). Released by autocatalytic processing. The protease can undergo further autoprocessing to yield 2 shorter but enzymatically active forms of 12 kDa and 13 kDa. In terms of processing, myristoylated. Myristoylation of the matrix (MA) domain mediates the transport and binding of Gag polyproteins to the host plasma membrane and is required for the assembly of viral particles. Post-translationally, specific enzymatic cleavages in vivo yield mature proteins.

The protein resides in the virion. It catalyses the reaction DNA(n) + a 2'-deoxyribonucleoside 5'-triphosphate = DNA(n+1) + diphosphate. It carries out the reaction Endonucleolytic cleavage to 5'-phosphomonoester.. The catalysed reaction is dUTP + H2O = dUMP + diphosphate + H(+). Its function is as follows. Matrix protein. Nucleocapsid protein p14: Nucleocapsid protein. Functionally, capsid protein. In terms of biological role, the aspartyl protease mediates proteolytic cleavages of Gag and Gag-Pol polyproteins during or shortly after the release of the virion from the plasma membrane. Cleavages take place as an ordered, step-wise cascade to yield mature proteins. This process is called maturation. Displays maximal activity during the budding process just prior to particle release from the cell. Its function is as follows. Enhances the activity of the reverse transcriptase. May be part of the mature RT. RT is a multifunctional enzyme that converts the viral dimeric RNA genome into dsDNA in the cytoplasm, shortly after virus entry into the cell. This enzyme displays a DNA polymerase activity that can copy either DNA or RNA templates, and a ribonuclease H (RNase H) activity that cleaves the RNA strand of RNA-DNA heteroduplexes in a partially processive 3' to 5' endonucleasic mode. Conversion of viral genomic RNA into dsDNA requires many steps. A tRNA binds to the primer-binding site (PBS) situated at the 5' end of the viral RNA. RT uses the 3' end of the tRNA primer to perfom a short round of RNA-dependent minus-strand DNA synthesis. The reading proceeds through the U5 region and ends after the repeated (R) region which is present at both ends of viral RNA. The portion of the RNA-DNA heteroduplex is digested by the RNase H, resulting in a ssDNA product attached to the tRNA primer. This ssDNA/tRNA hybridizes with the identical R region situated at the 3' end of viral RNA. This template exchange, known as minus-strand DNA strong stop transfer, can be either intra- or intermolecular. RT uses the 3' end of this newly synthesized short ssDNA to perfom the RNA-dependent minus-strand DNA synthesis of the whole template. RNase H digests the RNA template except for a polypurine tract (PPT) situated at the 5' end of the genome. It is not clear if both polymerase and RNase H activities are simultaneous. RNase H probably can proceed both in a polymerase-dependent (RNA cut into small fragments by the same RT performing DNA synthesis) and a polymerase-independent mode (cleavage of remaining RNA fragments by free RTs). Secondly, RT performs DNA-directed plus-strand DNA synthesis using the PPT that has not been removed by RNase H as primers. PPT and tRNA primers are then removed by RNase H. The 3' and 5' ssDNA PBS regions hybridize to form a circular dsDNA intermediate. Strand displacement synthesis by RT to the PBS and PPT ends produces a blunt ended, linear dsDNA copy of the viral genome that includes long terminal repeats (LTRs) at both ends. Functionally, catalyzes viral DNA integration into the host chromosome, by performing a series of DNA cutting and joining reactions. The chain is Gag-Pro-Pol polyprotein (gag-pro-pol) from Macaca mulatta (Rhesus macaque).